The sequence spans 297 residues: 33 kDa chaperonin (297 aa).

2 cysteine pairs are disulfide-bonded: Cys-232/Cys-234 and Cys-266/Cys-269.

This sequence belongs to the HSP33 family. In terms of processing, under oxidizing conditions two disulfide bonds are formed involving the reactive cysteines. Under reducing conditions zinc is bound to the reactive cysteines and the protein is inactive.

It localises to the cytoplasm. Redox regulated molecular chaperone. Protects both thermally unfolding and oxidatively damaged proteins from irreversible aggregation. Plays an important role in the bacterial defense system toward oxidative stress. In Pseudomonas aeruginosa (strain LESB58), this protein is 33 kDa chaperonin.